The chain runs to 97 residues: Nucleoid-associated protein HP_0035 (97 aa).

It belongs to the YbaB/EbfC family. As to quaternary structure, homodimer.

It is found in the cytoplasm. It localises to the nucleoid. Its function is as follows. Binds to DNA and alters its conformation. May be involved in regulation of gene expression, nucleoid organization and DNA protection. The protein is Nucleoid-associated protein HP_0035 of Helicobacter pylori (strain ATCC 700392 / 26695) (Campylobacter pylori).